A 491-amino-acid polypeptide reads, in one-letter code: Nicotinamide phosphoribosyltransferase (491 aa).

Residue Met-1 is modified to N-acetylmethionine. Phosphotyrosine is present on Tyr-188. Arg-196 serves as a coordination point for diphosphate. Asp-219 contributes to the beta-nicotinamide D-ribonucleotide binding site. Diphosphate is bound by residues His-247 and Arg-311. Beta-nicotinamide D-ribonucleotide-binding positions include 311–313 (RPD), 353–354 (GD), Gly-384, and Arg-392. Ser-472 bears the Phosphoserine mark.

The protein belongs to the NAPRTase family. Homodimer. Expressed in various tissues. At the highest level in liver and at the second highest in heart. The amount is higher in heart than in lung.

The protein resides in the nucleus. It localises to the cytoplasm. Its subcellular location is the secreted. The catalysed reaction is beta-nicotinamide D-ribonucleotide + diphosphate = 5-phospho-alpha-D-ribose 1-diphosphate + nicotinamide + H(+). Its pathway is cofactor biosynthesis; NAD(+) biosynthesis; nicotinamide D-ribonucleotide from 5-phospho-alpha-D-ribose 1-diphosphate and nicotinamide: step 1/1. Catalyzes the condensation of nicotinamide with 5-phosphoribosyl-1-pyrophosphate to yield nicotinamide mononucleotide, an intermediate in the biosynthesis of NAD. It is the rate limiting component in the mammalian NAD biosynthesis pathway. The secreted form behaves both as a cytokine with immunomodulating properties and an adipokine with anti-diabetic properties, it has no enzymatic activity, partly because of lack of activation by ATP, which has a low level in extracellular space and plasma. Plays a role in the modulation of circadian clock function. NAMPT-dependent oscillatory production of NAD regulates oscillation of clock target gene expression by releasing the core clock component: CLOCK-BMAL1 heterodimer from NAD-dependent SIRT1-mediated suppression. In Rattus norvegicus (Rat), this protein is Nicotinamide phosphoribosyltransferase (Nampt).